We begin with the raw amino-acid sequence, 349 residues long: Phosphoribosylformylglycinamidine cyclo-ligase (349 aa).

Belongs to the AIR synthase family.

It is found in the cytoplasm. The catalysed reaction is 2-formamido-N(1)-(5-O-phospho-beta-D-ribosyl)acetamidine + ATP = 5-amino-1-(5-phospho-beta-D-ribosyl)imidazole + ADP + phosphate + H(+). It participates in purine metabolism; IMP biosynthesis via de novo pathway; 5-amino-1-(5-phospho-D-ribosyl)imidazole from N(2)-formyl-N(1)-(5-phospho-D-ribosyl)glycinamide: step 2/2. This chain is Phosphoribosylformylglycinamidine cyclo-ligase, found in Albidiferax ferrireducens (strain ATCC BAA-621 / DSM 15236 / T118) (Rhodoferax ferrireducens).